The following is a 331-amino-acid chain: ATPase GET3 (331 aa).

32 to 39 contributes to the ATP binding site; sequence KGGVGKTT. The active site involves aspartate 61. Glutamate 235 and asparagine 262 together coordinate ATP. Zn(2+)-binding residues include cysteine 273 and cysteine 276.

It belongs to the arsA ATPase family. In terms of assembly, homodimer.

It is found in the cytoplasm. Its subcellular location is the endoplasmic reticulum. Functionally, ATPase required for the post-translational delivery of tail-anchored (TA) proteins to the endoplasmic reticulum. Recognizes and selectively binds the transmembrane domain of TA proteins in the cytosol. This complex then targets to the endoplasmic reticulum by membrane-bound receptors, where the tail-anchored protein is released for insertion. This process is regulated by ATP binding and hydrolysis. ATP binding drives the homodimer towards the closed dimer state, facilitating recognition of newly synthesized TA membrane proteins. ATP hydrolysis is required for insertion. Subsequently, the homodimer reverts towards the open dimer state, lowering its affinity for the membrane-bound receptor, and returning it to the cytosol to initiate a new round of targeting. This is ATPase GET3 from Malassezia globosa (strain ATCC MYA-4612 / CBS 7966) (Dandruff-associated fungus).